The sequence spans 363 residues: 3-isopropylmalate dehydrogenase (363 aa).

G79–E92 is a binding site for NAD(+). 4 residues coordinate substrate: R100, R110, R139, and D228. 3 residues coordinate Mg(2+): D228, D252, and D256. An NAD(+)-binding site is contributed by G286–N298.

It belongs to the isocitrate and isopropylmalate dehydrogenases family. LeuB type 1 subfamily. Homodimer. Requires Mg(2+) as cofactor. Mn(2+) serves as cofactor.

It localises to the cytoplasm. The catalysed reaction is (2R,3S)-3-isopropylmalate + NAD(+) = 4-methyl-2-oxopentanoate + CO2 + NADH. The protein operates within amino-acid biosynthesis; L-leucine biosynthesis; L-leucine from 3-methyl-2-oxobutanoate: step 3/4. Functionally, catalyzes the oxidation of 3-carboxy-2-hydroxy-4-methylpentanoate (3-isopropylmalate) to 3-carboxy-4-methyl-2-oxopentanoate. The product decarboxylates to 4-methyl-2 oxopentanoate. This Vibrio parahaemolyticus serotype O3:K6 (strain RIMD 2210633) protein is 3-isopropylmalate dehydrogenase.